We begin with the raw amino-acid sequence, 214 residues long: Clavatol biosynthesis cluster protein B (214 aa).

The N-terminal stretch at 1-17 (MAALSFQCLCVASAVRA) is a signal peptide. Residues Asn-103 and Asn-204 are each glycosylated (N-linked (GlcNAc...) asparagine).

It participates in secondary metabolite biosynthesis. Functionally, part of the cla gene cluster that produces clavatol and ortho-quinone methide. The clavatol biosynthesis cluster cla and the terrestric acid cluster tra are both involved in the production of peniphenones and penilactones. The non-reducing PKS claF is responsible for the formation of clavatol from successive condensations of 3 malonyl-CoA units, presumably with a simple acetyl-CoA starter unit, and 2 methylation steps. The esterase claE probably collaborates with claF by catalyzing the hydrolysis of ACP-bound acyl intermediates to free the ACP from stalled intermediates. The clavatol oxidase claD then converts clavatol to hydroxyclavatol. Spontaneous dehydration of hydroxyclavatol leads to the accumulation of the highly active ortho-quinone methide. On the other hand, the PKS-NRPS hybrid traA is involved in the formation of crustosic acid, with the help of traB and traD. The polyketide synthase module (PKS) of traA is responsible for the synthesis of the polyketide backbone via the condensation of an acetyl-CoA starter unit with 3 malonyl-CoA units. The downstream nonribosomal peptide synthetase (NRPS) module then amidates the carboxyl end of the polyketide with L-malic acid. Because traA lacks a designated enoylreductase (ER) domain, the required activity is provided the enoyl reductase traG. Crustosic acid undergoes decarboxylation and isomerization to the terrestric acid, catalyzed by the 2-oxoglutarate-dependent dioxygenase traH. Both acids are further converted to the 2 gamma-butyrolactones (R)-5-methyltetronic acid and (S)-5-carboxylmethyltetronic acid, with involvement of the cytochrome P450 monooxygenase claJ. Spontaneous addition of the methide to these gamma-butyrolactones leads to peniphenone D and penilactone D, which undergo again stereospecific attacking by methide to give penilactones A and B. The function of claB has not been investigated yet. The polypeptide is Clavatol biosynthesis cluster protein B (Penicillium crustosum (Blue mold fungus)).